The chain runs to 568 residues: TWiK family of potassium channels protein 9 (568 aa).

Residues 1-15 (MKCSFHIPEKYQWAS) are Cytoplasmic-facing. Residues 16 to 36 (TLFVHVALIAGVAVYTVFGAL) form a helical membrane-spanning segment. The segment at residues 163-183 (IGNSVIFAFTVITTIGYGHVA) is an intramembrane region (pore-forming). A helical membrane pass occupies residues 191–211 (LFLIFYGVIGVPFTLLTIADL). Over 212–316 (GMFLTRFLKN…NNEPRKTEES (105 aa)) the chain is Cytoplasmic. Disordered stretches follow at residues 243–262 (QRNK…RSEV) and 274–314 (MRTA…RKTE). Over residues 297 to 307 (GKEEDEEEPEN) the composition is skewed to acidic residues. The chain crosses the membrane as a helical span at residues 317–337 (IALGITFTCYLVAGAKILSVY). The pore-forming intramembrane region spans 343-363 (FFKALYFNFVTLTTIGLGDFV). A helical membrane pass occupies residues 370–390 (LLITLIYIGIGLALTTMAIEI). The Cytoplasmic portion of the chain corresponds to 391–568 (AADLLKKLHY…LRTYTNARRK (178 aa)).

It belongs to the two pore domain potassium channel (TC 1.A.1.8) family. In terms of tissue distribution, expressed in ray A-type neurons and cell bodies. Also seen in head, pharyngeal and phasmid neurons, and in coelomocytes.

Its subcellular location is the membrane. Potassium channel protein that may be component of regulatory network that controls ray development and function. The chain is TWiK family of potassium channels protein 9 (twk-9) from Caenorhabditis elegans.